A 120-amino-acid polypeptide reads, in one-letter code: uncharacterized protein (120 aa).

It to M.jannaschii MJ0361.

This is an uncharacterized protein from Methanocaldococcus jannaschii (strain ATCC 43067 / DSM 2661 / JAL-1 / JCM 10045 / NBRC 100440) (Methanococcus jannaschii).